Consider the following 357-residue polypeptide: MNHELRSVIDAINPVDQSLMAAAQAHLDNLTKPRGSLGRLEELAARLYCIAGGRRPLRVDPARVFTVAGDHGVSAEGVSPFPQEVTRQMVLNFANGGAGINVLCRTAGVDLRVVDAGCLGGPFPEHPALIQRKVAEGTASIARGPAMSLETCEKALLLGISLAEEAAADGCRCVGTGDMGISNTTPSTALYCAYLGLDPADITGPGAGLASEAVRHKVEVIRRALEVNRHIVEAGDPVATLAALGGIEIATLAGLVIGAARHGLACVIDGFISTAAFTAAWKICPDVRGYCFLSHASAEPGYRSVVDALNAQPLLHLGLRLGEGTGGALAMFLMRAAADIFNDMATFADAGVSEADD.

Catalysis depends on Glu-323, which acts as the Proton acceptor.

Belongs to the CobT family.

The catalysed reaction is 5,6-dimethylbenzimidazole + nicotinate beta-D-ribonucleotide = alpha-ribazole 5'-phosphate + nicotinate + H(+). It participates in nucleoside biosynthesis; alpha-ribazole biosynthesis; alpha-ribazole from 5,6-dimethylbenzimidazole: step 1/2. Catalyzes the synthesis of alpha-ribazole-5'-phosphate from nicotinate mononucleotide (NAMN) and 5,6-dimethylbenzimidazole (DMB). This Nitratidesulfovibrio vulgaris (strain DP4) (Desulfovibrio vulgaris) protein is Nicotinate-nucleotide--dimethylbenzimidazole phosphoribosyltransferase.